A 323-amino-acid chain; its full sequence is Beta-ketoacyl-[acyl-carrier-protein] synthase III (323 aa).

Residues cysteine 114 and histidine 250 contribute to the active site. The segment at 251-255 (QANLR) is ACP-binding. Asparagine 280 is an active-site residue.

It belongs to the thiolase-like superfamily. FabH family. Homodimer.

The protein localises to the cytoplasm. It carries out the reaction malonyl-[ACP] + acetyl-CoA + H(+) = 3-oxobutanoyl-[ACP] + CO2 + CoA. Its pathway is lipid metabolism; fatty acid biosynthesis. In terms of biological role, catalyzes the condensation reaction of fatty acid synthesis by the addition to an acyl acceptor of two carbons from malonyl-ACP. Catalyzes the first condensation reaction which initiates fatty acid synthesis and may therefore play a role in governing the total rate of fatty acid production. Possesses both acetoacetyl-ACP synthase and acetyl transacylase activities. Its substrate specificity determines the biosynthesis of branched-chain and/or straight-chain of fatty acids. This chain is Beta-ketoacyl-[acyl-carrier-protein] synthase III, found in Cereibacter sphaeroides (strain ATCC 17025 / ATH 2.4.3) (Rhodobacter sphaeroides).